Here is a 466-residue protein sequence, read N- to C-terminus: 3-isopropylmalate dehydratase large subunit (466 aa).

3 residues coordinate [4Fe-4S] cluster: C347, C407, and C410.

The protein belongs to the aconitase/IPM isomerase family. LeuC type 1 subfamily. In terms of assembly, heterodimer of LeuC and LeuD. The cofactor is [4Fe-4S] cluster.

It carries out the reaction (2R,3S)-3-isopropylmalate = (2S)-2-isopropylmalate. It functions in the pathway amino-acid biosynthesis; L-leucine biosynthesis; L-leucine from 3-methyl-2-oxobutanoate: step 2/4. In terms of biological role, catalyzes the isomerization between 2-isopropylmalate and 3-isopropylmalate, via the formation of 2-isopropylmaleate. This chain is 3-isopropylmalate dehydratase large subunit, found in Cronobacter sakazakii (strain ATCC BAA-894) (Enterobacter sakazakii).